A 393-amino-acid chain; its full sequence is MTQIGTPLSPTATRVLFCGSGELGKEVVIELQRLGVEVIAVDRYENAPAMQVAHRSHVINMLDGAALRAVIEAEKPDFIVPEIEAIATATLVELEAEGFTVIPTARAAQLTMNREGIRRLAAEELKLPTSPYHFADTFEAYSKAVEDLGFPCVVKPVMSSSGKGQSLLKSADDVQKAWDYAQEGGRAGKGRVIVEGFIDFDYEITLLTVRHIGGTTFCAPVGHRQEKGDYQESWQPQAMSPVALAESERVARAVTEALGGRGMFGVELFIKGDQVWFSEVSPRPHDTGLVTLISQDLSQFALHARAILGLPIPLIRQFGPSASAVILVEGQSTQTAFANLGAALAEPDTALRLFGKPEVNGQRRMGVALARDESIEAARAKATRASQAVDVKL.

N(1)-(5-phospho-beta-D-ribosyl)glycinamide contacts are provided by residues 22–23 (EL) and E82. ATP-binding positions include R114, K155, 160 to 165 (SSGKGQ), 195 to 198 (EGFI), and E203. The ATP-grasp domain maps to 119 to 308 (RLAAEELKLP…QFALHARAIL (190 aa)). Positions 267 and 279 each coordinate Mg(2+). N(1)-(5-phospho-beta-D-ribosyl)glycinamide contacts are provided by residues D286, K356, and 363-364 (RR).

The protein belongs to the PurK/PurT family. Homodimer.

It carries out the reaction N(1)-(5-phospho-beta-D-ribosyl)glycinamide + formate + ATP = N(2)-formyl-N(1)-(5-phospho-beta-D-ribosyl)glycinamide + ADP + phosphate + H(+). It participates in purine metabolism; IMP biosynthesis via de novo pathway; N(2)-formyl-N(1)-(5-phospho-D-ribosyl)glycinamide from N(1)-(5-phospho-D-ribosyl)glycinamide (formate route): step 1/1. Involved in the de novo purine biosynthesis. Catalyzes the transfer of formate to 5-phospho-ribosyl-glycinamide (GAR), producing 5-phospho-ribosyl-N-formylglycinamide (FGAR). Formate is provided by PurU via hydrolysis of 10-formyl-tetrahydrofolate. This Pseudomonas savastanoi pv. phaseolicola (strain 1448A / Race 6) (Pseudomonas syringae pv. phaseolicola (strain 1448A / Race 6)) protein is Formate-dependent phosphoribosylglycinamide formyltransferase.